We begin with the raw amino-acid sequence, 264 residues long: Ribosomal protein L11 methyltransferase (264 aa).

S-adenosyl-L-methionine is bound by residues Thr-116, Gly-137, Asp-159, and Asn-200.

Belongs to the methyltransferase superfamily. PrmA family.

Its subcellular location is the cytoplasm. The enzyme catalyses L-lysyl-[protein] + 3 S-adenosyl-L-methionine = N(6),N(6),N(6)-trimethyl-L-lysyl-[protein] + 3 S-adenosyl-L-homocysteine + 3 H(+). In terms of biological role, methylates ribosomal protein L11. This Thermotoga maritima (strain ATCC 43589 / DSM 3109 / JCM 10099 / NBRC 100826 / MSB8) protein is Ribosomal protein L11 methyltransferase.